Consider the following 341-residue polypeptide: Trimethylamine N-oxide transport system ATP-binding protein TmoW (341 aa).

The 260-residue stretch at Ile-6–Thr-265 folds into the ABC transporter domain. Gly-61 to Ser-68 lines the ATP pocket.

It belongs to the ABC transporter superfamily. As to quaternary structure, the complex is probably composed of two ATP-binding proteins (TmoW), two transmembrane proteins (TmoV) and a solute-binding protein (TmoX).

It localises to the cell inner membrane. The enzyme catalyses a quaternary ammonium(out) + ATP + H2O = a quaternary ammonium(in) + ADP + phosphate + H(+). Part of the ABC transporter complex TmoXWV involved in trimethylamine N-oxide (TMAO) import. Responsible for energy coupling to the transport system. This Pelagibacter ubique (strain HTCC1062) protein is Trimethylamine N-oxide transport system ATP-binding protein TmoW.